Reading from the N-terminus, the 1480-residue chain is C-type mannose receptor 2 (1480 aa).

Positions 1–30 (MGPIRPALAPWPRHLLRCVLLLGGLRLGHP) are cleaved as a signal peptide. At 31–1413 (ADSAAALLEP…SAALPENPVA (1383 aa)) the chain is on the extracellular side. A Ricin B-type lectin domain is found at 40-166 (PDVFLIFSQG…WNIYGSEEDL (127 aa)). 2 disulfides stabilise this stretch: Cys53-Cys67 and Cys92-Cys111. 2 N-linked (GlcNAc...) asparagine glycosylation sites follow: Asn101 and Asn139. The 49-residue stretch at 181–229 (SHGKPCTIPFKYDNQWFHGCTSTGREDGHLWCATTQDYGKDERWGFCPI) folds into the Fibronectin type-II domain. Cystine bridges form between Cys186–Cys212, Cys200–Cys227, Cys265–Cys358, and Cys334–Cys350. Positions 243–359 (LTDSCYQFNF…CSIALPYVCK (117 aa)) constitute a C-type lectin 1 domain. The N-linked (GlcNAc...) asparagine glycan is linked to Asn363. C-type lectin domains follow at residues 388–504 (FQGH…SICK), 527–643 (HSPS…RYIC), 677–808 (KLRH…WICK), 831–950 (FQEA…YICK), 978–1106 (FLNK…GFIC), 1131–1242 (YLNR…GAVC), and 1271–1391 (FREH…GVVC). 7 cysteine pairs are disulfide-bonded: Cys409–Cys503, Cys480–Cys495, Cys617–Cys634, Cys703–Cys807, Cys784–Cys799, Cys852–Cys949, and Cys926–Cys941. Asn1028 is a glycosylation site (N-linked (GlcNAc...) asparagine). Cys1077 and Cys1097 are oxidised to a cystine. Lys1141 participates in a covalent cross-link: Glycyl lysine isopeptide (Lys-Gly) (interchain with G-Cter in SUMO1). A disulfide bridge links Cys1219 with Cys1233. The N-linked (GlcNAc...) asparagine glycan is linked to Asn1348. Cys1367 and Cys1382 are disulfide-bonded. The chain crosses the membrane as a helical span at residues 1414–1434 (LVVVLTAAVLLLLALLTGALI). Over 1435–1480 (LYRRRQSAERGSFEGARYSRSSRSGPAEATEKNILVSDMEMNEQQE) the chain is Cytoplasmic. The tract at residues 1446-1480 (SFEGARYSRSSRSGPAEATEKNILVSDMEMNEQQE) is disordered.

Interacts directly with PLAUR/UPAR and PLAU/pro-UPA to form a tri-molecular complex. Interacts with collagen V. Interacts with C-terminal region of type I collagen/COL1A1. Post-translationally, N-glycosylated. In terms of processing, phosphorylated.

Its subcellular location is the cell membrane. Functionally, may play a role as endocytotic lectin receptor displaying calcium-dependent lectin activity. Internalizes glycosylated ligands from the extracellular space for release in an endosomal compartment via clathrin-mediated endocytosis. May be involved in plasminogen activation system controlling the extracellular level of PLAUR/PLAU, and thus may regulate protease activity at the cell surface. May contribute to cellular uptake, remodeling and degradation of extracellular collagen matrices. May participate in remodeling of extracellular matrix cooperating with the matrix metalloproteinases (MMPs) secreted by hepatic stellate cells. May mediate endocytosis of partially degraded collagens and glycoproteins produced in the extracellular matrix by MMPs. This is C-type mannose receptor 2 (Mrc2) from Rattus norvegicus (Rat).